A 182-amino-acid chain; its full sequence is UPF0149 protein CGSHiEE_07975 (182 aa).

Belongs to the UPF0149 family.

The sequence is that of UPF0149 protein CGSHiEE_07975 from Haemophilus influenzae (strain PittEE).